The primary structure comprises 220 residues: MIFTVPTVLEPSQLEQIRSILEKAEFVDGKLTAGWHAQLVKENQQLKSGQIQTQLTQTVKDALLKNALFQTAVRPRKIHSLLFSRYEVGMSYGTHIDNGLMGSNFWRSDVSFTLFLTAPKDYEGGELVIEGADDEKAYKLDLNSVLVYPSSTLHRVEPVTKGTRLVAVGWVQSLVRDASEREILFDLETARRAIFVQQGKTPEFDLISKSIANLLRKWAE.

One can recognise a Fe2OG dioxygenase domain in the interval 77–173 (KIHSLLFSRY…RLVAVGWVQS (97 aa)). Residues His-95, Asp-97, and His-154 each contribute to the Fe cation site. Residue Arg-164 coordinates 2-oxoglutarate.

Fe(2+) is required as a cofactor. It depends on L-ascorbate as a cofactor.

This is PKHD-type hydroxylase PCC7424_1929 from Gloeothece citriformis (strain PCC 7424) (Cyanothece sp. (strain PCC 7424)).